We begin with the raw amino-acid sequence, 603 residues long: MPAPGAPLSRTSRLLLLLLFKVSVSAALSFVPEPRNGTCLGESCSPLIPRRSRDAGGPRNSARDALRVHVPREKLEAEVRGATSWDLPPPRGGDTGVIEEAAASGPLGPPTKPPGAWRWKGAQGKEPSGHLGRREPTDSQLFRQTSERGEMSSKRDEIPQGSQEHSVKTEPEPRDLFYWPRKTGQLQGSHYRPSAVHEGRTLAPPGRALPQNGSADDWVPDQGGPRRGNSTNRRVRLKNPFYPLTQESYGAYAVMCLSVVIFGTGIIGNLAVMCIVCHNYYMRSISNSLLANLAFWDFLIIFFCLPLVIFHELTKKWLLEDFSCKIVPYIEVASLGVTTFTLCALCIDRFRAATNVQMYYEMIENCSSTTAKLAVIWVGALLLALPEVVLRQLSKEDLGFSGQAPAERCVIKISPDLPDTIYVLALTYDGARLWWYFGCYFCLPTLFTITCSLVTARKIRKAEKASTRGNKRQIHLESQMNCTVVALTILYGFCIIPENICNIVTAYMATGVSQQTMDLLNIISQFLLFFKSCVTPVLLFCLCRPFSRAFMECCCCCCEECIQKSSTVTSDDNDNEYTTELELSPFSTIRREMSTFASVGTHC.

A signal peptide spans 1–26; the sequence is MPAPGAPLSRTSRLLLLLLFKVSVSA. Residues 27-255 are Extracellular-facing; sequence ALSFVPEPRN…QESYGAYAVM (229 aa). Asparagine 36 is a glycosylation site (N-linked (GlcNAc...) asparagine). A disordered region spans residues 39-232; it reads CLGESCSPLI…GGPRRGNSTN (194 aa). Composition is skewed to basic and acidic residues over residues 51-79, 145-158, and 165-175; these read RSRD…EAEV, TSER…RDEI, and HSVKTEPEPRD. N-linked (GlcNAc...) asparagine glycosylation is found at asparagine 212 and asparagine 229. A helical membrane pass occupies residues 256–276; that stretch reads CLSVVIFGTGIIGNLAVMCIV. Topologically, residues 277 to 289 are cytoplasmic; the sequence is CHNYYMRSISNSL. A helical transmembrane segment spans residues 290–310; the sequence is LANLAFWDFLIIFFCLPLVIF. The Extracellular segment spans residues 311-325; the sequence is HELTKKWLLEDFSCK. Cysteine 324 and cysteine 409 are joined by a disulfide. The helical transmembrane segment at 326–346 threads the bilayer; it reads IVPYIEVASLGVTTFTLCALC. Over 347 to 369 the chain is Cytoplasmic; that stretch reads IDRFRAATNVQMYYEMIENCSST. Residues 370-390 traverse the membrane as a helical segment; sequence TAKLAVIWVGALLLALPEVVL. Topologically, residues 391 to 433 are extracellular; it reads RQLSKEDLGFSGQAPAERCVIKISPDLPDTIYVLALTYDGARL. The helical transmembrane segment at 434–454 threads the bilayer; sequence WWYFGCYFCLPTLFTITCSLV. Over 455 to 483 the chain is Cytoplasmic; it reads TARKIRKAEKASTRGNKRQIHLESQMNCT. A helical transmembrane segment spans residues 484 to 504; sequence VVALTILYGFCIIPENICNIV. Residues 505 to 521 lie on the Extracellular side of the membrane; it reads TAYMATGVSQQTMDLLN. The helical transmembrane segment at 522 to 542 threads the bilayer; it reads IISQFLLFFKSCVTPVLLFCL. Residues 543 to 603 lie on the Cytoplasmic side of the membrane; that stretch reads CRPFSRAFME…STFASVGTHC (61 aa).

Belongs to the G-protein coupled receptor 1 family. As to quaternary structure, forms a complex with PRKN, STUB1 and HSP70. The amount of STUB1 in the complex increases during ER stress. STUB1 promotes the dissociation of HSP70 from PRKN, thus facilitating PRKN-mediated GPR37 ubiquitination. Interacts with PACRG. In terms of processing, the N-terminus is cleaved by ADAM10 metalloproteinase; mediating limited proteolysis leading to the release of receptor ectodomain by shedding. In addition, cleaved by FURIN between Arg-53 and Asp-54. Post-translationally, ubiquitinated by PRKN in the presence of UBE2E1 and UBE2L3 in the endoplasmic reticulum. The unfolded form is specifically ubiquitinated by SYVN1, which promotes its proteasomal degradation and prevents neuronal cell death. As to expression, highly expressed in the brain. High levels of expression were seen in fiber tracts such as the corpus callosum, anterior commissure, fornix, internal capsule, cerebral peduncles, and stria terminalis. Additionally, moderate levels of expression were seen in the pyramidal tracts and cerebellar peduncles, as well as in the spinal tract of the trigeminal nerve and the spinal fasciculi.

Its subcellular location is the cell projection. It localises to the dendrite. The protein resides in the synapse. The protein localises to the cell membrane. It is found in the endoplasmic reticulum membrane. In terms of biological role, G-protein-coupled receptor that plays a role in several physiological pathways such as resolution of inflammatory pain and oligodendrocyte differentiation. Acts as a receptor for several ligands including prosaposin, osteocalcin or neuroprotectin D1. Ligand binding induces endocytosis, followed by an ERK phosphorylation cascade. Acts as a receptor for osteocalcin (OCN) to regulate oligodendrocyte differentiation and central nervous system myelination. Mechanistically, plays a negative role in oligodendrocyte differentiation and myelination during development via activation of the ERK1/2 signaling pathway. Therefore, regulates the stability of myelin or resistance of myelin itself to demyelination. Upon activation by neuroprotectin D1 (NPD1), promotes the activation of phagocytosis in macrophages as well as the shift in cytokine release toward an anti-inflammatory profile, and thus helps to reverse inflammatory pain. In addition, the increased macrophage phagocytosis mediates protection against sepsis upon pathogen infection. Additionally, extracellular vesicles derived from efferocyte express prosaposin, which binds to macrophage GPR37 to increase expression of the efferocytosis receptor TIM4 via an ERK-AP1-dependent signaling axis, leading to increased macrophage efferocytosis efficiency and accelerated resolution of inflammation. May also act as a maturation factor of LRP6, protecting LRP6 from the endoplasmic reticulum (ER)-associated protein degradation (ERAD) and thereby promoting the Wnt/beta-catenin signaling pathway. In Rattus norvegicus (Rat), this protein is Prosaposin receptor GPR37 (Gpr37).